Here is a 127-residue protein sequence, read N- to C-terminus: Anti-adapter protein IraD (127 aa).

It belongs to the GpW/Gp25 family. IraD subfamily. As to quaternary structure, interacts with RssB.

Its subcellular location is the cytoplasm. Inhibits RpoS proteolysis by regulating RssB activity, thereby increasing the stability of the sigma stress factor RpoS during oxidative stress. Its effect on RpoS stability is due to its interaction with RssB, which probably blocks the interaction of RssB with RpoS, and the consequent delivery of the RssB-RpoS complex to the ClpXP protein degradation pathway. This chain is Anti-adapter protein IraD, found in Escherichia coli O127:H6 (strain E2348/69 / EPEC).